The primary structure comprises 2959 residues: uncharacterized protein (2959 aa).

The protein localises to the virion. This is an uncharacterized protein from Acanthamoeba polyphaga mimivirus (APMV).